Reading from the N-terminus, the 308-residue chain is Isoflavone reductase homolog (308 aa).

Residues 11 to 17, Arg-36, and Lys-45 each bind NADP(+); that span reads GGTGYIG. Lys-133 functions as the Proton acceptor in the catalytic mechanism. An NADP(+)-binding site is contributed by Arg-137.

It belongs to the NmrA-type oxidoreductase family. Isoflavone reductase subfamily.

It localises to the cytoplasm. The sequence is that of Isoflavone reductase homolog from Solanum tuberosum (Potato).